We begin with the raw amino-acid sequence, 212 residues long: Methylthioribulose-1-phosphate dehydratase (212 aa).

Zn(2+)-binding residues include His97 and His99.

The protein belongs to the aldolase class II family. MtnB subfamily. As to quaternary structure, homotetramer. Zn(2+) is required as a cofactor.

The enzyme catalyses 5-(methylsulfanyl)-D-ribulose 1-phosphate = 5-methylsulfanyl-2,3-dioxopentyl phosphate + H2O. It participates in amino-acid biosynthesis; L-methionine biosynthesis via salvage pathway; L-methionine from S-methyl-5-thio-alpha-D-ribose 1-phosphate: step 2/6. Its function is as follows. Catalyzes the dehydration of methylthioribulose-1-phosphate (MTRu-1-P) into 2,3-diketo-5-methylthiopentyl-1-phosphate (DK-MTP-1-P). The chain is Methylthioribulose-1-phosphate dehydratase from Bacillus mycoides (strain KBAB4) (Bacillus weihenstephanensis).